A 505-amino-acid polypeptide reads, in one-letter code: ATP synthase subunit alpha (505 aa).

169–176 is a binding site for ATP; it reads GDRQIGKT.

Belongs to the ATPase alpha/beta chains family. As to quaternary structure, F-type ATPases have 2 components, CF(1) - the catalytic core - and CF(0) - the membrane proton channel. CF(1) has five subunits: alpha(3), beta(3), gamma(1), delta(1), epsilon(1). CF(0) has three main subunits: a(1), b(2) and c(9-12). The alpha and beta chains form an alternating ring which encloses part of the gamma chain. CF(1) is attached to CF(0) by a central stalk formed by the gamma and epsilon chains, while a peripheral stalk is formed by the delta and b chains.

Its subcellular location is the cell inner membrane. The enzyme catalyses ATP + H2O + 4 H(+)(in) = ADP + phosphate + 5 H(+)(out). Functionally, produces ATP from ADP in the presence of a proton gradient across the membrane. The alpha chain is a regulatory subunit. This Desulfatibacillum aliphaticivorans protein is ATP synthase subunit alpha.